The sequence spans 76 residues: uncharacterized protein (76 aa).

A helical membrane pass occupies residues 24-44 (GAIFLVCYPLYCVVCFVSVLC).

The protein resides in the membrane. This is an uncharacterized protein from Schizosaccharomyces pombe (strain 972 / ATCC 24843) (Fission yeast).